Here is a 311-residue protein sequence, read N- to C-terminus: Ribosomal RNA small subunit methyltransferase H (311 aa).

Residues 39–41, aspartate 59, phenylalanine 81, aspartate 102, and histidine 109 contribute to the S-adenosyl-L-methionine site; that span reads GGH.

It belongs to the methyltransferase superfamily. RsmH family.

It localises to the cytoplasm. The enzyme catalyses cytidine(1402) in 16S rRNA + S-adenosyl-L-methionine = N(4)-methylcytidine(1402) in 16S rRNA + S-adenosyl-L-homocysteine + H(+). Its function is as follows. Specifically methylates the N4 position of cytidine in position 1402 (C1402) of 16S rRNA. This is Ribosomal RNA small subunit methyltransferase H from Porphyromonas gingivalis (strain ATCC BAA-308 / W83).